Consider the following 85-residue polypeptide: Small cysteine and glycine repeat-containing protein 5 (85 aa).

The tract at residues 4-69 is 10 X 2 AA repeats of CG; it reads CGCGGCGGCG…TCCSCGCGCG (66 aa).

It belongs to the KRTAP type 28 family.

Its function is as follows. In the hair cortex, hair keratin intermediate filaments are embedded in an interfilamentous matrix, consisting of hair keratin-associated proteins (KRTAP), which are essential for the formation of a rigid and resistant hair shaft through their extensive disulfide bond cross-linking with abundant cysteine residues of hair keratins. The matrix proteins include the high-sulfur and high-glycine-tyrosine keratins. The chain is Small cysteine and glycine repeat-containing protein 5 from Homo sapiens (Human).